A 393-amino-acid polypeptide reads, in one-letter code: Argininosuccinate synthase (393 aa).

ATP-binding positions include 10 to 18 (AYSGGLDTS) and A37. Y88 is a binding site for L-citrulline. G118 provides a ligand contact to ATP. L-aspartate-binding residues include T120, N124, and D125. N124 is a binding site for L-citrulline. L-citrulline contacts are provided by R128, S176, S185, E261, and Y273.

This sequence belongs to the argininosuccinate synthase family. Type 1 subfamily. In terms of assembly, homotetramer.

It is found in the cytoplasm. The catalysed reaction is L-citrulline + L-aspartate + ATP = 2-(N(omega)-L-arginino)succinate + AMP + diphosphate + H(+). Its pathway is amino-acid biosynthesis; L-arginine biosynthesis; L-arginine from L-ornithine and carbamoyl phosphate: step 2/3. The chain is Argininosuccinate synthase from Carsonella ruddii (strain PV).